Reading from the N-terminus, the 273-residue chain is Phosphate import ATP-binding protein PstB (273 aa).

The ABC transporter domain maps to 19-258 (ISIQNVTISY…FNETEKIFNS (240 aa)). 51-58 (GPSGCGKS) is an ATP binding site.

The protein belongs to the ABC transporter superfamily. Phosphate importer (TC 3.A.1.7) family. In terms of assembly, the complex is composed of two ATP-binding proteins (PstB), two transmembrane proteins (PstC and PstA) and a solute-binding protein (PstS).

The protein localises to the cell inner membrane. The catalysed reaction is phosphate(out) + ATP + H2O = ADP + 2 phosphate(in) + H(+). Part of the ABC transporter complex PstSACB involved in phosphate import. Responsible for energy coupling to the transport system. The chain is Phosphate import ATP-binding protein PstB from Parasynechococcus marenigrum (strain WH8102).